The sequence spans 471 residues: ATP synthase subunit beta (471 aa).

ATP is bound at residue 156 to 163 (GGAGVGKT).

Belongs to the ATPase alpha/beta chains family. As to quaternary structure, F-type ATPases have 2 components, CF(1) - the catalytic core - and CF(0) - the membrane proton channel. CF(1) has five subunits: alpha(3), beta(3), gamma(1), delta(1), epsilon(1). CF(0) has three main subunits: a(1), b(2) and c(9-12). The alpha and beta chains form an alternating ring which encloses part of the gamma chain. CF(1) is attached to CF(0) by a central stalk formed by the gamma and epsilon chains, while a peripheral stalk is formed by the delta and b chains.

The protein resides in the cell membrane. It catalyses the reaction ATP + H2O + 4 H(+)(in) = ADP + phosphate + 5 H(+)(out). Produces ATP from ADP in the presence of a proton gradient across the membrane. The catalytic sites are hosted primarily by the beta subunits. The chain is ATP synthase subunit beta from Lysinibacillus sphaericus (strain C3-41).